Reading from the N-terminus, the 484-residue chain is PTS system N-acetylmuramic acid-specific EIIBC component (484 aa).

In terms of domain architecture, PTS EIIB type-1 spans 1–89 (MAKITSNTVS…NQLIDSLTSG (89 aa)). C28 serves as the catalytic Phosphocysteine intermediate; for EIIB activity. In terms of domain architecture, PTS EIIC type-1 spans 125 to 484 (SKFATIFTPL…FFGCKDVDLS (360 aa)). Helical transmembrane passes span 127–147 (FATIFTPLIPGFIAAGLLLGF), 168–188 (LIAYMKVFGKGLFAFLSILIG), 194–214 (AFGGSGVNGAILASLFVLGYN), 228–248 (FFGFAIDPRGNIIGVLLAAII), 266–286 (MILTSVITLLIMGAVTFLIIM), 310–330 (AAILAGLFLISVVFGIHQGFV), 345–365 (LFPILAMAGGGQVGASMALYF), 379–399 (GAIIPGLLGIGEPLIYGVTLP), 409–429 (IGGAAGGFFIGLVSYLGLPVG), and 451–471 (IFPGMMVFVAGLLISYIVGFL).

The protein localises to the cell inner membrane. It catalyses the reaction N-acetyl-beta-D-muramate(out) + N(pros)-phospho-L-histidyl-[protein] = N-acetyl-beta-D-muramate 6-phosphate(in) + L-histidyl-[protein]. The phosphoenolpyruvate-dependent sugar phosphotransferase system (sugar PTS), a major carbohydrate active transport system, catalyzes the phosphorylation of incoming sugar substrates concomitantly with their translocation across the cell membrane. This system is involved in N-acetylmuramic acid (MurNAc) transport, yielding cytoplasmic MurNAc-6-P. Is also able to take up anhydro-N-acetylmuramic acid (anhMurNAc), but cannot phosphorylate the carbon 6, probably because of the 1,6-anhydro ring. The polypeptide is PTS system N-acetylmuramic acid-specific EIIBC component (murP) (Vibrio parahaemolyticus serotype O3:K6 (strain RIMD 2210633)).